Here is a 527-residue protein sequence, read N- to C-terminus: Sensory neuron membrane protein 1 (527 aa).

Residues 1-10 lie on the Cytoplasmic side of the membrane; the sequence is MQLQKPLKIG. A helical membrane pass occupies residues 11-31; it reads LGMMGAGLFGIIFGWVLFPVI. Topologically, residues 32-456 are extracellular; sequence LKSQLKKEMA…LKNQLFIPKR (425 aa). N-linked (GlcNAc...) asparagine glycosylation is found at N67 and N229. 3 disulfide bridges follow: C268–C333, C297–C352, and C335–C341. A glycan (N-linked (GlcNAc...) asparagine) is linked at N440. Residues 457 to 477 traverse the membrane as a helical segment; it reads IVSVVKWLLAGVGFVGLVGSL. At 478–527 the chain is on the cytoplasmic side; the sequence is VYQFKGKMINFALSPSSAPVTKVNPEINQQNQPKDISIIGESQNPPKVDM.

The protein belongs to the CD36 family. As to expression, principal component of the olfactory cilia membrane. Localizes to the antennal tissue with two to three fold higher expression in males compared to females.

The protein resides in the cell membrane. In terms of biological role, plays an olfactory role that is not restricted to pheromone sensitivity. This chain is Sensory neuron membrane protein 1, found in Ostrinia nubilalis (European corn borer).